We begin with the raw amino-acid sequence, 37 residues long: Large ribosomal subunit protein bL36 (37 aa).

The protein belongs to the bacterial ribosomal protein bL36 family.

The sequence is that of Large ribosomal subunit protein bL36 from Francisella tularensis subsp. tularensis (strain FSC 198).